A 430-amino-acid polypeptide reads, in one-letter code: MNKLESPSEIDVAGPSPRHKTTQVMVGNVAVGGGAPIVVQSMTNTDTADIEGTIAQVAALSRAGSEMVRMTVDRDEAAAAVPHIRDGLRKRGITTPLIGDFHYIGHKLLADHPSCAEALDKYRINPGNVGFKDKRDKQFTDIVETAIKYGKAVRIGANWGSLDQELLTHLMEENANSAAPLDARAVTREAMVQSALLSAKRAEEIGLPKTRMVLSAKVSAVQDLIAVYQTLASRSDYAIHLGLTEAGMGSKGIVASSAALGILLQQGIGDTIRISLTPEPGGDRTLEVQVAQELLQTMGFRTFVPLVAACPGCGRTTSTTFQELARSIQDFIRDEMPNWKTQYPGVEQLNVAVMGCIVNGPGESKHADIGISLPGTGEAPAAPVFVDGKKFKTLRGPAIAQDFKALVIDYIEQRYGDAAKARAEAVSAAE.

[4Fe-4S] cluster-binding residues include Cys310, Cys313, Cys356, and Glu363.

Belongs to the IspG family. The cofactor is [4Fe-4S] cluster.

The catalysed reaction is (2E)-4-hydroxy-3-methylbut-2-enyl diphosphate + oxidized [flavodoxin] + H2O + 2 H(+) = 2-C-methyl-D-erythritol 2,4-cyclic diphosphate + reduced [flavodoxin]. It functions in the pathway isoprenoid biosynthesis; isopentenyl diphosphate biosynthesis via DXP pathway; isopentenyl diphosphate from 1-deoxy-D-xylulose 5-phosphate: step 5/6. Functionally, converts 2C-methyl-D-erythritol 2,4-cyclodiphosphate (ME-2,4cPP) into 1-hydroxy-2-methyl-2-(E)-butenyl 4-diphosphate. This Nitrobacter winogradskyi (strain ATCC 25391 / DSM 10237 / CIP 104748 / NCIMB 11846 / Nb-255) protein is 4-hydroxy-3-methylbut-2-en-1-yl diphosphate synthase (flavodoxin).